We begin with the raw amino-acid sequence, 390 residues long: Scoulerine-9-O-methyltransferase 1 (390 aa).

Glu153 provides a ligand contact to substrate. Residues Met207, Ser211, Gly235, Asp258, 278 to 279 (DM), and Lys292 contribute to the S-adenosyl-L-methionine site. Residue His296 is the Proton acceptor of the active site. 296–297 (HD) contacts substrate.

The protein belongs to the class I-like SAM-binding methyltransferase superfamily. Cation-independent O-methyltransferase family. COMT subfamily. As to quaternary structure, homodimer. Highly expressed in capsules. Expressed is stems. Expressed at low levels in roots.

It catalyses the reaction (S)-scoulerine + S-adenosyl-L-methionine = (S)-tetrahydrocolumbamine + S-adenosyl-L-homocysteine + H(+). It carries out the reaction (S)-tetrahydrocolumbamine + S-adenosyl-L-methionine = (S)-tetrahydropalmatine + S-adenosyl-L-homocysteine + H(+). The enzyme catalyses (S)-norreticuline + S-adenosyl-L-methionine = (S)-norcodamine + S-adenosyl-L-homocysteine + H(+). The catalysed reaction is (S)-reticuline + S-adenosyl-L-methionine = (S)-codamine + S-adenosyl-L-homocysteine + H(+). It participates in alkaloid biosynthesis. Methyltransferase involved in the biosynthesis of the benzylisoquinoline alkaloid noscapine. Catalyzes the conversion of (S)-scoulerine to (S)-tetrahydrocolumbamine. Can convert (S)-tetrahydrocolumbamine to tetrahydropalmatine. Can convert (S)-norreticuline to (S)-norcodamine. Can convert (S)-reticuline to (S)-codamine. Substrate preference is (S)-scoulerine &gt; (S)-tetrahydrocolumbamine &gt; (S)-norreticuline &gt; (S)-reticuline. The chain is Scoulerine-9-O-methyltransferase 1 from Papaver somniferum (Opium poppy).